Here is a 294-residue protein sequence, read N- to C-terminus: Large ribosomal subunit protein uL18 (294 aa).

Residues 247-275 (RADPSPSAKKAAKPSKRHTAKRLTYDERK) are disordered. Basic residues predominate over residues 256–267 (KAAKPSKRHTAK).

It belongs to the universal ribosomal protein uL18 family. In terms of assembly, component of the large ribosomal subunit (LSU).

It is found in the cytoplasm. The protein localises to the nucleus. Component of the ribosome, a large ribonucleoprotein complex responsible for the synthesis of proteins in the cell. The small ribosomal subunit (SSU) binds messenger RNAs (mRNAs) and translates the encoded message by selecting cognate aminoacyl-transfer RNA (tRNA) molecules. The large subunit (LSU) contains the ribosomal catalytic site termed the peptidyl transferase center (PTC), which catalyzes the formation of peptide bonds, thereby polymerizing the amino acids delivered by tRNAs into a polypeptide chain. The nascent polypeptides leave the ribosome through a tunnel in the LSU and interact with protein factors that function in enzymatic processing, targeting, and the membrane insertion of nascent chains at the exit of the ribosomal tunnel. This chain is Large ribosomal subunit protein uL18 (rpl-5), found in Caenorhabditis briggsae.